We begin with the raw amino-acid sequence, 103 residues long: Omega toxin Ap5 (103 aa).

The N-terminal stretch at 1 to 22 is a signal peptide; sequence MNTIQVILFAVVLVLTVTVGQA. Positions 23–57 are excised as a propeptide; the sequence is DEDSAETSLLRKLEEAEASMFGQYLEESKNSREKR. 3 cysteine pairs are disulfide-bonded: Cys-58–Cys-73, Cys-65–Cys-78, and Cys-72–Cys-93.

Belongs to the neurotoxin 14 (magi-1) family. 08 (Ltx-4) subfamily. As to expression, expressed by the venom duct.

It localises to the secreted. In terms of biological role, shows a weak inhibition on the voltage-gated calcium channel Cav2.1/CACNA1A and some voltage-gated sodium channels (with 1 uM toxin tested: 22.08% inhibition on Cav2.1/CACNA1A, 6.6% on Nav1.1/SCN1A, 4.2% on Nav1.5, and 16% on Nav1.7). Its function is as follows. Shows a weak inhibition on the voltage-gated calcium channel Cav2.1/CACNA1A (28.06% at 1 uM). This Acanthoscurria paulensis (Brazilian giant black tarantula spider) protein is Omega toxin Ap5.